Consider the following 451-residue polypeptide: Speckle-type POZ protein homolog (451 aa).

The segment at 51 to 75 is disordered; that stretch reads EVVSSGSGNSAHGRSISPSPSSASH. The segment covering 60 to 75 has biased composition (low complexity); it reads SAHGRSISPSPSSASH. Positions 95–225 constitute an MATH domain; it reads KFNYMWTINN…GDRLSIFCEV (131 aa). Positions 265–338 constitute a BTB domain; it reads SDFTLVCKSD…MYTGQTKYIE (74 aa).

This sequence belongs to the Tdpoz family.

It is found in the nucleus. Its subcellular location is the nucleus speckle. The protein operates within protein modification; protein ubiquitination. In terms of biological role, mediates ubiquitination and proteasomal degradation of target proteins, most likely in complex with cul-3. May promote the degradation of bromodomain-containing proteins such as bet-1. In Caenorhabditis elegans, this protein is Speckle-type POZ protein homolog.